A 503-amino-acid chain; its full sequence is Chromodomain Y-like protein 2 (503 aa).

The Chromo domain occupies 7–67 (YEVERIVDKR…LHLSKDKRVK (61 aa)). The interval 66–177 (VKSGKQAGAS…GNGSHQPDLE (112 aa)) is disordered. Residues 88-98 (RLSHRPLEPGK) are compositionally biased toward basic and acidic residues. The segment covering 101–120 (PSSHKRKRVNSPLSRPKKGS) has biased composition (basic residues). A compositionally biased stretch (polar residues) spans 130–140 (KTVSYRTTPSG).

As to quaternary structure, interacts (via chromo domain) with histone H3K9me3.

It localises to the nucleus. The sequence is that of Chromodomain Y-like protein 2 (Cdyl2) from Mus musculus (Mouse).